Consider the following 104-residue polypeptide: MQTVSTETVPGHETVEALGIARGNTVEARNVGRDITQSIRNITGGELKAYSELLSKARDEALSRMEADAEEMGADAVVNVRLETSKVTDGGSEVIAYGTAVRLR.

This sequence belongs to the UPF0145 family.

This is UPF0145 protein NP_2600A from Natronomonas pharaonis (strain ATCC 35678 / DSM 2160 / CIP 103997 / JCM 8858 / NBRC 14720 / NCIMB 2260 / Gabara) (Halobacterium pharaonis).